Reading from the N-terminus, the 222-residue chain is L-serine dehydratase, beta chain (222 aa).

The ACT domain occupies 150–222 (TILLEYPEQR…RFTTAKYVEV (73 aa)).

Belongs to the iron-sulfur dependent L-serine dehydratase family. As to quaternary structure, heterooctamer of four alpha chains and four beta chains. Requires [4Fe-4S] cluster as cofactor.

The enzyme catalyses L-serine = pyruvate + NH4(+). It functions in the pathway carbohydrate biosynthesis; gluconeogenesis. This Peptoniphilus asaccharolyticus (Peptostreptococcus asaccharolyticus) protein is L-serine dehydratase, beta chain (sdhB).